A 578-amino-acid chain; its full sequence is Palmitoyltransferase ZDHHC1 (578 aa).

Residues 1-41 (MDVCSKNSNRTAPVSEGGIRRADVPLCSRTNGWSWPPHPFQ) lie on the Cytoplasmic side of the membrane. The helical transmembrane segment at 42-62 (FLAWLLYLYFAVTGFGVFVPL) threads the bilayer. Residues 63–71 (LPTHWIPAG) lie on the Lumenal side of the membrane. The helical transmembrane segment at 72–92 (YICTGITFVCHLFMHLMAVSI) threads the bilayer. Residues 93-174 (DPADYNVRAK…YWLFLNSVIS (82 aa)) are Cytoplasmic-facing. The DHHC domain occupies 121–173 (ENCHCYLCEVDVGPKSKHCSACNKCVASFDHHCRWLNNCVGSRNYWLFLNSVI). Cys-153 functions as the S-palmitoyl cysteine intermediate in the catalytic mechanism. Residues 175-195 (ALLGIVLVVVIASYVFIEFFL) traverse the membrane as a helical segment. Topologically, residues 196–230 (DPSKLRSDKHFQQVRNESVVWFVFLPVAPVTTAGP) are lumenal. A helical transmembrane segment spans residues 231 to 251 (AIPALAGVTIALGLLSALLLG). Residues 252-578 (HLLCFHIYLM…PSSRVGTSLA (327 aa)) are Cytoplasmic-facing. A compositionally biased stretch (basic and acidic residues) spans 278–288 (QEAGDSRKPPP). 4 disordered regions span residues 278–298 (QEAG…PKLN), 345–376 (HMDE…KRKV), 497–517 (SAAG…TAAR), and 532–578 (SMFM…TSLA). Over residues 363–376 (PHPHKHAQKKKRKV) the composition is skewed to basic residues. Positions 552–561 (AAKRKQTGKK) are enriched in basic residues.

Belongs to the DHHC palmitoyltransferase family.

Its subcellular location is the endosome membrane. The protein resides in the endoplasmic reticulum membrane. The protein localises to the golgi apparatus. It catalyses the reaction L-cysteinyl-[protein] + hexadecanoyl-CoA = S-hexadecanoyl-L-cysteinyl-[protein] + CoA. Its function is as follows. Palmitoyltransferase that catalyzes the addition of palmitate onto various protein substrates, such as ncdn and nlrp3. This Danio rerio (Zebrafish) protein is Palmitoyltransferase ZDHHC1.